Consider the following 517-residue polypeptide: UDP-N-acetylmuramoyl-tripeptide--D-alanyl-D-alanine ligase (517 aa).

138-144 contacts ATP; sequence GSSGKTS.

The protein belongs to the MurCDEF family. MurF subfamily.

Its subcellular location is the cytoplasm. It catalyses the reaction D-alanyl-D-alanine + UDP-N-acetyl-alpha-D-muramoyl-L-alanyl-gamma-D-glutamyl-meso-2,6-diaminopimelate + ATP = UDP-N-acetyl-alpha-D-muramoyl-L-alanyl-gamma-D-glutamyl-meso-2,6-diaminopimeloyl-D-alanyl-D-alanine + ADP + phosphate + H(+). Its pathway is cell wall biogenesis; peptidoglycan biosynthesis. Its function is as follows. Involved in cell wall formation. Catalyzes the final step in the synthesis of UDP-N-acetylmuramoyl-pentapeptide, the precursor of murein. The polypeptide is UDP-N-acetylmuramoyl-tripeptide--D-alanyl-D-alanine ligase (Mycobacterium leprae (strain TN)).